Here is a 646-residue protein sequence, read N- to C-terminus: UvrABC system protein B (646 aa).

The Helicase ATP-binding domain occupies 29–411 (LEKNPEKSKQ…SNQVVEQIIR (383 aa)). An ATP-binding site is contributed by 42–49 (GVTGSGKT). The Beta-hairpin signature appears at 95 to 118 (YYDYYQPESYIPQKDQYIEKDAQI). The Helicase C-terminal domain occupies 428–590 (QVEDIIKETE…ITPQTIVKPI (163 aa)). The UVR domain occupies 609 to 644 (PNVIVELEAEMYEAAEALEFEKAIKIRDTIAKLKKK).

It belongs to the UvrB family. In terms of assembly, forms a heterotetramer with UvrA during the search for lesions. Interacts with UvrC in an incision complex.

The protein localises to the cytoplasm. The UvrABC repair system catalyzes the recognition and processing of DNA lesions. A damage recognition complex composed of 2 UvrA and 2 UvrB subunits scans DNA for abnormalities. Upon binding of the UvrA(2)B(2) complex to a putative damaged site, the DNA wraps around one UvrB monomer. DNA wrap is dependent on ATP binding by UvrB and probably causes local melting of the DNA helix, facilitating insertion of UvrB beta-hairpin between the DNA strands. Then UvrB probes one DNA strand for the presence of a lesion. If a lesion is found the UvrA subunits dissociate and the UvrB-DNA preincision complex is formed. This complex is subsequently bound by UvrC and the second UvrB is released. If no lesion is found, the DNA wraps around the other UvrB subunit that will check the other stand for damage. This is UvrABC system protein B from Methanococcus maripaludis (strain DSM 14266 / JCM 13030 / NBRC 101832 / S2 / LL).